The chain runs to 100 residues: Urease subunit gamma (100 aa).

Belongs to the urease gamma subunit family. In terms of assembly, heterotrimer of UreA (gamma), UreB (beta) and UreC (alpha) subunits. Three heterotrimers associate to form the active enzyme.

It is found in the cytoplasm. It carries out the reaction urea + 2 H2O + H(+) = hydrogencarbonate + 2 NH4(+). Its pathway is nitrogen metabolism; urea degradation; CO(2) and NH(3) from urea (urease route): step 1/1. The sequence is that of Urease subunit gamma from Haemophilus influenzae (strain PittEE).